Reading from the N-terminus, the 263-residue chain is 3-methyl-2-oxobutanoate hydroxymethyltransferase (263 aa).

Residues D45 and D84 each contribute to the Mg(2+) site. Residues 45 to 46 (DS), D84, and K112 contribute to the 3-methyl-2-oxobutanoate site. A Mg(2+)-binding site is contributed by E114. E180 (proton acceptor) is an active-site residue.

It belongs to the PanB family. As to quaternary structure, homodecamer; pentamer of dimers. It depends on Mg(2+) as a cofactor.

The protein resides in the cytoplasm. The catalysed reaction is 3-methyl-2-oxobutanoate + (6R)-5,10-methylene-5,6,7,8-tetrahydrofolate + H2O = 2-dehydropantoate + (6S)-5,6,7,8-tetrahydrofolate. It participates in cofactor biosynthesis; (R)-pantothenate biosynthesis; (R)-pantoate from 3-methyl-2-oxobutanoate: step 1/2. Functionally, catalyzes the reversible reaction in which hydroxymethyl group from 5,10-methylenetetrahydrofolate is transferred onto alpha-ketoisovalerate to form ketopantoate. The sequence is that of 3-methyl-2-oxobutanoate hydroxymethyltransferase from Citrobacter koseri (strain ATCC BAA-895 / CDC 4225-83 / SGSC4696).